The following is a 157-amino-acid chain: Deoxyuridine 5'-triphosphate nucleotidohydrolase (157 aa).

Residues Ser-63, Gly-76, Asp-79, Tyr-82, Lys-87, Arg-132, Phe-137, and Gly-138 each coordinate dUMP. Residues 125 to 157 (NDLESTERGAGGFGSTGINDEKKRKLDEAEAKE) form a disordered region. The span at 143 to 157 (NDEKKRKLDEAEAKE) shows a compositional bias: basic and acidic residues.

This sequence belongs to the dUTPase family. In terms of assembly, homotrimer. Requires Mg(2+) as cofactor.

It carries out the reaction dUTP + H2O = dUMP + diphosphate + H(+). Its pathway is pyrimidine metabolism; dUMP biosynthesis; dUMP from dCTP (dUTP route): step 2/2. Involved in nucleotide metabolism via production of dUMP, the immediate precursor of thymidine nucleotides, and decreases the intracellular concentration of dUTP so that uracil cannot be incorporated into DNA. This Yarrowia lipolytica (strain CLIB 122 / E 150) (Yeast) protein is Deoxyuridine 5'-triphosphate nucleotidohydrolase (DUT1).